Here is a 460-residue protein sequence, read N- to C-terminus: Keratin, type I cytoskeletal 27 (460 aa).

The head stretch occupies residues 1-83 (MSVRFSSASR…GNEHGLLSGN (83 aa)). Residues 84–119 (EKVTMQNLNDRLASYLDNVRALEEANADLEQKIKGW) are coil 1A. The 316-residue stretch at 84 to 399 (EKVTMQNLND…RLIDGEDGSC (316 aa)) folds into the IF rod domain. The interval 120–141 (YEKFGPGSCRGLDHDYSRYFTV) is linker 1. Residues 142–233 (IDDLRNQIIS…KNHEEEMKAL (92 aa)) form a coil 1B region. The segment at 234–256 (QCAAGGNVNVEMNAAPGVDLTVL) is linker 12. The interval 257-395 (LNNMRAEYEA…ETYCRLIDGE (139 aa)) is coil 2. The segment at 396–460 (DGSCAKSKGY…NVKSEQRVPS (65 aa)) is tail. The interval 435–460 (LSSRVHSVEEKSTKVNNVKSEQRVPS) is disordered. Over residues 448 to 460 (KVNNVKSEQRVPS) the composition is skewed to polar residues.

It belongs to the intermediate filament family. As to quaternary structure, heterotetramer of two type I and two type II keratins. Interacts with KRT6A to form filaments.

The protein resides in the cytoplasm. In terms of biological role, essential for the proper assembly of type I and type II keratin protein complexes and formation of keratin intermediate filaments in the inner root sheath (irs). The protein is Keratin, type I cytoskeletal 27 of Bos taurus (Bovine).